We begin with the raw amino-acid sequence, 94 residues long: Alpha-galactosyl-binding lectin (94 aa).

As to quaternary structure, homodimer. Post-translationally, contains three disulfide bonds.

Its function is as follows. Alpha-galactosyl-binding lectin with preference for galactose-alpha-1,4-galactose. This Lyophyllum decastes (Fried chicken mushroom) protein is Alpha-galactosyl-binding lectin.